A 445-amino-acid chain; its full sequence is UDP-N-acetylmuramoylalanine--D-glutamate ligase (445 aa).

Residue 117–123 (GSNGKTT) coordinates ATP.

It belongs to the MurCDEF family.

It is found in the cytoplasm. The enzyme catalyses UDP-N-acetyl-alpha-D-muramoyl-L-alanine + D-glutamate + ATP = UDP-N-acetyl-alpha-D-muramoyl-L-alanyl-D-glutamate + ADP + phosphate + H(+). Its pathway is cell wall biogenesis; peptidoglycan biosynthesis. In terms of biological role, cell wall formation. Catalyzes the addition of glutamate to the nucleotide precursor UDP-N-acetylmuramoyl-L-alanine (UMA). This Neisseria meningitidis serogroup A / serotype 4A (strain DSM 15465 / Z2491) protein is UDP-N-acetylmuramoylalanine--D-glutamate ligase.